Consider the following 513-residue polypeptide: Calcium-dependent protein kinase 2 (513 aa).

The region spanning Tyr-65–Leu-323 is the Protein kinase domain. Residues Leu-71–Thr-79 and Lys-94 contribute to the ATP site. Residue Asp-189 is the Proton acceptor of the active site. The tract at residues Ala-329–Ile-359 is autoinhibitory domain. 4 consecutive EF-hand domains span residues Glu-366–Lys-401, Leu-402–Leu-437, Glu-438–Gly-473, and Ile-478–Gln-508. Residues Asp-379, Asp-381, Ser-383, Thr-385, Glu-390, Asp-415, Asp-417, Asn-419, Ser-421, Glu-426, Asp-451, Asp-453, Ser-455, Glu-462, Asp-486, Asp-488, Asp-490, Arg-492, and Glu-497 each coordinate Ca(2+).

It belongs to the protein kinase superfamily. Ser/Thr protein kinase family. CDPK subfamily.

It carries out the reaction L-seryl-[protein] + ATP = O-phospho-L-seryl-[protein] + ADP + H(+). It catalyses the reaction L-threonyl-[protein] + ATP = O-phospho-L-threonyl-[protein] + ADP + H(+). With respect to regulation, activated by calcium. Autophosphorylation may play an important role in the regulation of the kinase activity. Functionally, may play a role in signal transduction pathways that involve calcium as a second messenger. The chain is Calcium-dependent protein kinase 2 (CPK2) from Zea mays (Maize).